A 556-amino-acid polypeptide reads, in one-letter code: Hydroxylamine reductase (556 aa).

[4Fe-4S] cluster is bound by residues C5, C8, C17, and C23. Residues H249, E273, C317, C409, C437, C462, E497, and K499 each contribute to the hybrid [4Fe-2O-2S] cluster site. The residue at position 409 (C409) is a Cysteine persulfide.

The protein belongs to the HCP family. The cofactor is [4Fe-4S] cluster. Hybrid [4Fe-2O-2S] cluster is required as a cofactor.

Its subcellular location is the cytoplasm. The enzyme catalyses A + NH4(+) + H2O = hydroxylamine + AH2 + H(+). Functionally, catalyzes the reduction of hydroxylamine to form NH(3) and H(2)O. This is Hydroxylamine reductase from Kosmotoga olearia (strain ATCC BAA-1733 / DSM 21960 / TBF 19.5.1).